Reading from the N-terminus, the 366-residue chain is 3-dehydroquinate synthase (366 aa).

Residues 107–111, 131–132, Lys144, and Lys153 each bind NAD(+); these read GVIGD and TT. Residues Glu186, His251, and His268 each contribute to the Zn(2+) site.

It belongs to the sugar phosphate cyclases superfamily. Dehydroquinate synthase family. It depends on Co(2+) as a cofactor. Zn(2+) is required as a cofactor. The cofactor is NAD(+).

It localises to the cytoplasm. The catalysed reaction is 7-phospho-2-dehydro-3-deoxy-D-arabino-heptonate = 3-dehydroquinate + phosphate. Its pathway is metabolic intermediate biosynthesis; chorismate biosynthesis; chorismate from D-erythrose 4-phosphate and phosphoenolpyruvate: step 2/7. Functionally, catalyzes the conversion of 3-deoxy-D-arabino-heptulosonate 7-phosphate (DAHP) to dehydroquinate (DHQ). This chain is 3-dehydroquinate synthase, found in Microcystis aeruginosa (strain NIES-843 / IAM M-2473).